The following is a 302-amino-acid chain: MTLPPLSHLDRLEAESIHILREVAAEFRAPVMLYSVGKDSSVLLHLLLKAFAPSRPPIPLLHIDTRWKFREMIAFRDRRAAETGVDLRVHINPDGVAQDVGPISHGAAVHTDIMKTQGLKQALEHGGFDAAIGGARRDEEKSRAKERVFSFRTARHRWDPKNQRPELWNLYNARTGPGESVRVFPLSNWTELDIWLYIYREKIPVVPLYFAAPRPVVERDGAWIMVDDARLPLRPGETPQLRSVRFRTLGCYPLTGAIDSDADTLEAVIAEMLVSTSSERQGRMIDHAPGASMEQKKLEGYF.

This sequence belongs to the PAPS reductase family. CysD subfamily. As to quaternary structure, heterodimer composed of CysD, the smaller subunit, and CysN.

It catalyses the reaction sulfate + ATP + H(+) = adenosine 5'-phosphosulfate + diphosphate. It participates in sulfur metabolism; hydrogen sulfide biosynthesis; sulfite from sulfate: step 1/3. Functionally, with CysN forms the ATP sulfurylase (ATPS) that catalyzes the adenylation of sulfate producing adenosine 5'-phosphosulfate (APS) and diphosphate, the first enzymatic step in sulfur assimilation pathway. APS synthesis involves the formation of a high-energy phosphoric-sulfuric acid anhydride bond driven by GTP hydrolysis by CysN coupled to ATP hydrolysis by CysD. This Xanthomonas euvesicatoria pv. vesicatoria (strain 85-10) (Xanthomonas campestris pv. vesicatoria) protein is Sulfate adenylyltransferase subunit 2.